Consider the following 512-residue polypeptide: Ribose import ATP-binding protein RbsA (512 aa).

ABC transporter domains lie at 6-242 (LELR…VNRE) and 252-496 (VPAG…TGAQ). An ATP-binding site is contributed by 38 to 45 (GENGAGKS).

It belongs to the ABC transporter superfamily. Ribose importer (TC 3.A.1.2.1) family. The complex is composed of an ATP-binding protein (RbsA), two transmembrane proteins (RbsC) and a solute-binding protein (RbsB).

Its subcellular location is the cell inner membrane. The enzyme catalyses D-ribose(out) + ATP + H2O = D-ribose(in) + ADP + phosphate + H(+). Functionally, part of the ABC transporter complex RbsABC involved in ribose import. Responsible for energy coupling to the transport system. The polypeptide is Ribose import ATP-binding protein RbsA (Pseudomonas putida (strain ATCC 47054 / DSM 6125 / CFBP 8728 / NCIMB 11950 / KT2440)).